Reading from the N-terminus, the 248-residue chain is Isoamyl acetate-hydrolyzing esterase 1 homolog (248 aa).

Ser-24 (nucleophile) is an active-site residue. Lys-63 carries the post-translational modification N6-succinyllysine. The active-site Proton donor is Asp-196. The Proton acceptor role is filled by His-199.

This sequence belongs to the 'GDSL' lipolytic enzyme family. IAH1 subfamily.

In terms of biological role, probable lipase. The chain is Isoamyl acetate-hydrolyzing esterase 1 homolog (IAH1) from Homo sapiens (Human).